The chain runs to 561 residues: Long-chain-fatty-acid--CoA ligase (561 aa).

213–224 contributes to the ATP binding site; the sequence is YTGGTTGVAKGA.

Belongs to the ATP-dependent AMP-binding enzyme family. Requires Mg(2+) as cofactor.

It localises to the membrane. The catalysed reaction is a long-chain fatty acid + ATP + CoA = a long-chain fatty acyl-CoA + AMP + diphosphate. It functions in the pathway lipid metabolism; fatty acid beta-oxidation. In terms of biological role, catalyzes the esterification, concomitant with transport, of exogenous long-chain fatty acids into metabolically active CoA thioesters for subsequent degradation or incorporation into phospholipids. The protein is Long-chain-fatty-acid--CoA ligase (fadD) of Escherichia coli O6:H1 (strain CFT073 / ATCC 700928 / UPEC).